The primary structure comprises 265 residues: Uridylate kinase (265 aa).

A disordered region spans residues 1-29 (MTESREPHVAGSAAPRPEPANGLASGQPS). Residue 40–43 (KLGG) coordinates ATP. G81 provides a ligand contact to UMP. ATP contacts are provided by G82 and R86. UMP is bound by residues D101 and 162 to 169 (MGLPYFST). F195 and D198 together coordinate ATP.

Belongs to the UMP kinase family. Homohexamer.

The protein resides in the cytoplasm. The catalysed reaction is UMP + ATP = UDP + ADP. It functions in the pathway pyrimidine metabolism; CTP biosynthesis via de novo pathway; UDP from UMP (UMPK route): step 1/1. Inhibited by UTP. Functionally, catalyzes the reversible phosphorylation of UMP to UDP. This Mycobacterium avium (strain 104) protein is Uridylate kinase.